The sequence spans 216 residues: tRNA (guanine-N(7)-)-methyltransferase (216 aa).

S-adenosyl-L-methionine contacts are provided by E43, D68, N95, and N117. Residues D153 and 190 to 193 each bind substrate; that span reads TEYE.

The protein belongs to the class I-like SAM-binding methyltransferase superfamily. TrmB family.

The enzyme catalyses guanosine(46) in tRNA + S-adenosyl-L-methionine = N(7)-methylguanosine(46) in tRNA + S-adenosyl-L-homocysteine. The protein operates within tRNA modification; N(7)-methylguanine-tRNA biosynthesis. Functionally, catalyzes the formation of N(7)-methylguanine at position 46 (m7G46) in tRNA. The protein is tRNA (guanine-N(7)-)-methyltransferase of Desulfitobacterium hafniense (strain Y51).